Consider the following 447-residue polypeptide: Innexin-5 (447 aa).

4 consecutive transmembrane segments (helical) span residues 30-47 (TSTL…SQYV), 108-128 (QWIP…SIIW), 198-218 (ALYL…FWIL), and 283-303 (VYVF…CSLA). Positions 389–447 (KKDDDSALPASAPVDLQEDDDDDTPFPPPTKAVAETLTSDDEEEETDVDSPDTTATLPR) are disordered. Residues 426–438 (TSDDEEEETDVDS) show a composition bias toward acidic residues.

The protein belongs to the pannexin family.

It is found in the cell membrane. The protein localises to the cell junction. The protein resides in the gap junction. Functionally, structural component of the gap junctions. This Caenorhabditis elegans protein is Innexin-5 (inx-5).